A 344-amino-acid chain; its full sequence is Arginase 2, chloroplastic/mitochondrial (344 aa).

The transit peptide at 1 to 26 (MWKIGQRGVPYFQRLIAAPFTTLRSL) directs the protein to the chloroplast and mitochondrion. The Mn(2+) site is built by histidine 163, aspartate 187, histidine 189, and aspartate 191. Substrate is bound by residues 189–193 (HPDIY), 197–199 (EGN), and asparagine 228. Mn(2+) contacts are provided by aspartate 272 and aspartate 274. Residue glutamate 315 coordinates substrate.

This sequence belongs to the arginase family. Mn(2+) is required as a cofactor. As to expression, expressed in vasculature of roots, root tips, leaves and cotyledons.

The protein resides in the mitochondrion. The protein localises to the plastid. It localises to the chloroplast. The enzyme catalyses L-arginine + H2O = urea + L-ornithine. It catalyses the reaction agmatine + H2O = urea + putrescine. Its pathway is nitrogen metabolism; urea cycle; L-ornithine and urea from L-arginine: step 1/1. It participates in amine and polyamine biosynthesis; putrescine biosynthesis via agmatine pathway; putrescine from agmatine: step 1/1. Its function is as follows. Catalyzes the hydrolysis of L-arginine to urea and L-ornithine. The latter can be utilized in the urea cycle or as a precursor for the synthesis of both polyamines and proline. Possesses agmatinase activity. Catalyzes the formation of putrescine from agmatine. The protein is Arginase 2, chloroplastic/mitochondrial (ARGAH2) of Arabidopsis thaliana (Mouse-ear cress).